The sequence spans 106 residues: Large ribosomal subunit protein P1 (106 aa).

Residues 69-106 (AAAAAPAEEAKEEAKEEEEEEEEVKEEEAIEGLGALFG) are disordered. Positions 83–98 (KEEEEEEEEVKEEEAI) are enriched in acidic residues.

Belongs to the eukaryotic ribosomal protein P1/P2 family. As to quaternary structure, part of the 50S ribosomal subunit. Homodimer, it forms part of the ribosomal stalk which helps the ribosome interact with GTP-bound translation factors. Forms a heptameric uL10/P0(P1)2(P1)2(P1)2 complex, where uL10/P0 forms an elongated spine to which the P1 dimers bind in a sequential fashion.

Functionally, forms part of the ribosomal stalk, playing a central role in the interaction of the ribosome with GTP-bound translation factors. This is Large ribosomal subunit protein P1 from Archaeoglobus fulgidus (strain ATCC 49558 / DSM 4304 / JCM 9628 / NBRC 100126 / VC-16).